The chain runs to 291 residues: uncharacterized protein (291 aa).

This is an uncharacterized protein from Acanthamoeba polyphaga mimivirus (APMV).